The following is a 392-amino-acid chain: Stilbene synthase 3 (392 aa).

Residue 55–58 participates in substrate binding; it reads KFNR. The active site involves Cys-164. Residues Leu-267 and 305–307 each bind substrate; that span reads GGP.

The protein belongs to the thiolase-like superfamily. Chalcone/stilbene synthases family. Homodimer.

It localises to the cytoplasm. It catalyses the reaction 4-coumaroyl-CoA + 3 malonyl-CoA + 3 H(+) = trans-resveratrol + 4 CO2 + 4 CoA. The protein operates within phytoalexin biosynthesis; 3,4',5-trihydroxystilbene biosynthesis; 3,4',5-trihydroxystilbene from trans-4-coumarate: step 2/2. In terms of biological role, mediates resistance to pathogens which are sensitive to stilbenes. This chain is Stilbene synthase 3, found in Vitis vinifera (Grape).